Here is a 79-residue protein sequence, read N- to C-terminus: Conotoxin ArMSGL-0122 (79 aa).

The N-terminal stretch at 1-20 (MSRLGIMVLTLLLLVFIVTS) is a signal peptide. Residues 21–44 (HQDAGEKQATQRAAINFRWKRSLT) constitute a propeptide that is removed on maturation. 3 disulfide bridges follow: cysteine 52–cysteine 64, cysteine 56–cysteine 73, and cysteine 63–cysteine 77. Leucine 78 is subject to Leucine amide.

Belongs to the conotoxin O3 superfamily. In terms of tissue distribution, expressed by the venom duct.

Its subcellular location is the secreted. The protein is Conotoxin ArMSGL-0122 of Conus arenatus (Sand-dusted cone).